The following is a 761-amino-acid chain: 3'-5' RNA nuclease TATDN2 (761 aa).

Disordered stretches follow at residues 1-90 (MASE…HFLG), 135-181 (CSLK…LRDQ), 197-294 (KSMP…RRTV), 318-337 (KDRE…SDVE), 343-364 (RFSQ…SSFT), and 388-486 (SSPK…PKSH). Low complexity-rich tracts occupy residues 33 to 52 (APSS…PSSP) and 66 to 85 (SRRL…SSFS). Residues 247–294 (QKEKDATPEVSMEEDKTVPERSSFYDRRVVIDPQEKPSEEPLGDRRTV) show a composition bias toward basic and acidic residues. Residues 388–402 (SSPKPSSYPSTGSSS) show a composition bias toward low complexity. Residues 417–431 (SDYSPNSTGSVQNTS) are compositionally biased toward polar residues. Over residues 452 to 470 (RSSEEREVKEKRTFQEEMP) the composition is skewed to basic and acidic residues. A divalent metal cation contacts are provided by histidine 499, histidine 501, glutamate 593, histidine 630, histidine 655, and aspartate 707.

The protein belongs to the metallo-dependent hydrolases superfamily. TatD-type hydrolase family. Mg(2+) serves as cofactor.

The protein resides in the nucleus. Mg(2+)-dependent 3'RNA exonuclease and endonuclease that resolves R-loops via specific degradation of R-loop RNA stucture. Shows no activity against D-loop and minimal activity against the RNA strand of an RNA-DNA hybrid duplex oligomer. Has no 3' or 5' exonuclease activity, no uracil glycosylase activity, and no 5' flap endonuclease activity on DNA substrates. May have a role in maintaining genomic stability through its role in R-loop resolution. In Homo sapiens (Human), this protein is 3'-5' RNA nuclease TATDN2 (TATDN2).